The following is a 230-amino-acid chain: Urease accessory protein UreF (230 aa).

The protein belongs to the UreF family. As to quaternary structure, ureD, UreF and UreG form a complex that acts as a GTP-hydrolysis-dependent molecular chaperone, activating the urease apoprotein by helping to assemble the nickel containing metallocenter of UreC. The UreE protein probably delivers the nickel.

It is found in the cytoplasm. Functionally, required for maturation of urease via the functional incorporation of the urease nickel metallocenter. The protein is Urease accessory protein UreF of Cupriavidus metallidurans (strain ATCC 43123 / DSM 2839 / NBRC 102507 / CH34) (Ralstonia metallidurans).